Consider the following 248-residue polypeptide: mRNA-decapping protein OPG122 (248 aa).

One can recognise a Nudix hydrolase domain in the interval 45–227 (HKRVSVSAIL…IAKYALDTAK (183 aa)). A Nudix box motif is present at residues 125–147 (GGIPKRGENVPECLSREIKEEVN).

This sequence belongs to the Nudix hydrolase family. Interacts with the late transcription elongation factor VLTF-4/OPG110. Interacts with the late transcription factors VLTF-1. Requires Mg(2+) as cofactor. Mn(2+) serves as cofactor.

Its subcellular location is the host mitochondrion. Functionally, acts with RNA polymerase to initiate transcription from late gene promoters. The protein is mRNA-decapping protein OPG122 (OPG122) of Cynomys gunnisoni (Gunnison's prairie dog).